Reading from the N-terminus, the 437-residue chain is Epsilon-sarcoglycan (437 aa).

At 1-317 (MLLFWWWELG…LKSRDYYTDF (317 aa)) the chain is on the extracellular side. N-linked (GlcNAc...) asparagine glycosylation is present at N200. A helical membrane pass occupies residues 318–338 (LVTLAVPSAVALVLFLILAYI). The Cytoplasmic portion of the chain corresponds to 339 to 437 (MCCRREGVEK…QQQTTGKWYP (99 aa)).

This sequence belongs to the sarcoglycan alpha/epsilon family. Post-translationally, N-glycosylated. Ubiquitinated, leading to its degradation by the proteasome. In terms of tissue distribution, in both neural tissues including cerebellar cortex, striatum, cerebral cortex, thalamus and hippocampus, and non-neural tissues including quadriceps muscle, liver, kidney, spleen, lung, testis and heart. Widely distributed in the brain, with a robust signal obtained from regions with dense neuronal packing such as the pyramidal cell layer of the hippocampus, cerebellar molecular layer, and cerebral cortex. Levels are highest in kidney, moderate in brain and lung, and low in skeletal muscle, liver, spleen and testis.

It localises to the cell membrane. It is found in the sarcolemma. The protein localises to the cytoplasm. Its subcellular location is the cytoskeleton. The protein resides in the cell projection. It localises to the dendrite. It is found in the golgi apparatus. Functionally, component of the sarcoglycan complex, a subcomplex of the dystrophin-glycoprotein complex which forms a link between the F-actin cytoskeleton and the extracellular matrix. This Rattus norvegicus (Rat) protein is Epsilon-sarcoglycan.